A 491-amino-acid polypeptide reads, in one-letter code: Probable polygalacturonase (491 aa).

Residues 15-35 form a helical membrane-spanning segment; it reads PIVSFYCFQVVSVLVAVVLLL. N-linked (GlcNAc...) asparagine glycosylation is found at Asn-165, Asn-175, and Asn-214. 4 PbH1 repeats span residues 230–256, 257–278, 319–340, and 348–369; these read SRNILIQGITILAPVRSPNTDGINPDS, CTNTRIEDCYIVSGDDCVAVKS, IQDVRAEDIVAINSESGIRIKT, and VKDIYVRGMTMKTMKWAFWMTG. Asp-271 acts as the Proton donor in catalysis. N-linked (GlcNAc...) asparagine glycosylation is found at Asn-399 and Asn-421.

This sequence belongs to the glycosyl hydrolase 28 family.

The protein localises to the membrane. The catalysed reaction is (1,4-alpha-D-galacturonosyl)n+m + H2O = (1,4-alpha-D-galacturonosyl)n + (1,4-alpha-D-galacturonosyl)m.. The protein is Probable polygalacturonase of Vitis vinifera (Grape).